A 127-amino-acid polypeptide reads, in one-letter code: MAQSVPPGDINTQPSQKIVFNAPYDDKHTYHIKITNAGGRRIGWAIKTTNMRRLSVDPPCGVLDPKEKVLMAVSCDTFNAATEDLNNDRITIEWTNTPDGAAKQFRREWFQGDGMVRRKNLPIEYNL.

N-acetylalanine is present on Ala2. Positions 9-126 (DINTQPSQKI…RRKNLPIEYN (118 aa)) constitute an MSP domain.

Forms filaments 10 nm wide, with a characteristic substructure repeating axially at 9 nm. In terms of tissue distribution, sperm.

The protein resides in the cell projection. It localises to the pseudopodium. The protein localises to the cytoplasm. Its subcellular location is the cytoskeleton. In terms of biological role, central component in molecular interactions underlying sperm crawling. Forms an extensive filament system that extends from sperm villipoda, along the leading edge of the pseudopod. The protein is Major sperm protein isoform alpha of Ascaris suum (Pig roundworm).